The following is a 146-amino-acid chain: Flavodoxin (146 aa).

The Flavodoxin-like domain maps to 4-143 (SLIVYGSTTG…EIVSWGSGIA (140 aa)).

This sequence belongs to the flavodoxin family. Requires FMN as cofactor.

Its function is as follows. Low-potential electron donor to a number of redox enzymes. This is Flavodoxin from Maridesulfovibrio salexigens (strain ATCC 14822 / DSM 2638 / NCIMB 8403 / VKM B-1763) (Desulfovibrio salexigens).